We begin with the raw amino-acid sequence, 402 residues long: MDRPRQNDHLGVNRIGKNIRKSPLHQSTFAASTSNGAAPRLQTQPQVYNISKNDFRSIVQQLTGSPSRESLPRPPQNNSLRPQNTRLQRIRPSPLTQLNRPAVPLPSMAPPQSHPQFARQPPHQPPFPQTTQQPMMGHRDQFWSNTAESPVSEYMRYLQSSLGDSGPNANQMQPGHEQRPYIPGHEQRPYVPGNEQQPYMPGNEQRPYIPGHEQRSYMPAQSQSQSQPQPQPQPQQHMMPGPQPRMNMQGPLQPNQYLPPPGLVPSPVPHNLPSPRFNAPVPVTPTQPSPMFSQMYGGFPSPRYNGFGPLQSPTSQFLQPSPTGYPNMFSPRSPYPLLSPGVQYPQPLTPNFSFSQIAQQGSLGPGAGPSQGPPQPPPSPGLMFPLSPSGFFPMPSPRWNDY.

4 disordered regions span residues 1–44 (MDRP…LQTQ), 63–135 (TGSP…QQPM), 160–266 (SSLG…LVPS), and 346–402 (QPLT…WNDY). Polar residues predominate over residues 24–44 (LHQSTFAASTSNGAAPRLQTQ). The VQ signature appears at 55–64 (FRSIVQQLTG). The segment covering 76-87 (QNNSLRPQNTRL) has biased composition (polar residues). Over residues 103 to 113 (VPLPSMAPPQS) the composition is skewed to pro residues. Residues 160–173 (SSLGDSGPNANQMQ) are compositionally biased toward polar residues. Low complexity predominate over residues 218–240 (MPAQSQSQSQPQPQPQPQQHMMP). A compositionally biased stretch (pro residues) spans 257-266 (YLPPPGLVPS). A compositionally biased stretch (polar residues) spans 349 to 358 (TPNFSFSQIA). The segment covering 371–380 (QGPPQPPPSP) has biased composition (pro residues). Positions 381–390 (GLMFPLSPSG) are enriched in low complexity.

In terms of assembly, interacts with WRKY10. Interacts with MPK6.

The protein localises to the nucleus. Its function is as follows. Modulates seed size by negatively regulating the cellularization of syncytial endosperm. May function by binding and modulating the activity of WRKY10 transcription factor. This chain is Protein HAIKU1, found in Arabidopsis thaliana (Mouse-ear cress).